Here is a 417-residue protein sequence, read N- to C-terminus: uncharacterized protein (417 aa).

Positions 1–21 (MPYYWGAILIGGVFLAGCTQN) are cleaved as a signal peptide.

This is an uncharacterized protein from Methanocaldococcus jannaschii (strain ATCC 43067 / DSM 2661 / JAL-1 / JCM 10045 / NBRC 100440) (Methanococcus jannaschii).